The primary structure comprises 40 residues: Photosystem II reaction center protein J (40 aa).

The chain crosses the membrane as a helical span at residues isoleucine 8–phenylalanine 28.

It belongs to the PsbJ family. PSII is composed of 1 copy each of membrane proteins PsbA, PsbB, PsbC, PsbD, PsbE, PsbF, PsbH, PsbI, PsbJ, PsbK, PsbL, PsbM, PsbT, PsbX, PsbY, PsbZ, Psb30/Ycf12, at least 3 peripheral proteins of the oxygen-evolving complex and a large number of cofactors. It forms dimeric complexes.

It localises to the plastid membrane. Its function is as follows. One of the components of the core complex of photosystem II (PSII). PSII is a light-driven water:plastoquinone oxidoreductase that uses light energy to abstract electrons from H(2)O, generating O(2) and a proton gradient subsequently used for ATP formation. It consists of a core antenna complex that captures photons, and an electron transfer chain that converts photonic excitation into a charge separation. The polypeptide is Photosystem II reaction center protein J (Cuscuta gronovii (Common dodder)).